The sequence spans 462 residues: Cytochrome b558/566 subunit A (462 aa).

The Cytoplasmic portion of the chain corresponds to 1–8 (MSLKIKSK). The chain crosses the membrane as a helical span at residues 9 to 26 (ITIGVLLIIFLLSIIFTL). Residues 27-431 (ENVSLAQTSP…TSTSPVTTIS (405 aa)) are Extracellular-facing. 16 N-linked (GlcNAc...) asparagine glycosylation sites follow: N28, N65, N91, N121, N144, N164, N174, N183, N211, N278, N279, N293, N316, N339, N353, and N376. A helical membrane pass occupies residues 432-456 (SAIPPVTLYVTIIGVVVALVALVIL). Over 457-462 (YVVFRR) the chain is Cytoplasmic.

Requires heme as cofactor. In terms of processing, N-glycosylated on at least seven Asn residues by identical hexasaccharide units composed of Man, GlcNAc, Glc and 6-deoxy-6-sulfoglucose residues in the molar ration of 2:2:1:1. Post-translationally, O-glycosylated on probably as many as 35 positions by single Man residues.

The protein resides in the cell membrane. Monoheme cytochrome whose physiological function is not yet clear. This is Cytochrome b558/566 subunit A (cbsA) from Sulfolobus acidocaldarius (strain ATCC 33909 / DSM 639 / JCM 8929 / NBRC 15157 / NCIMB 11770).